Here is a 423-residue protein sequence, read N- to C-terminus: Gamma-glutamyl phosphate reductase (423 aa).

This sequence belongs to the gamma-glutamyl phosphate reductase family.

The protein resides in the cytoplasm. The enzyme catalyses L-glutamate 5-semialdehyde + phosphate + NADP(+) = L-glutamyl 5-phosphate + NADPH + H(+). It functions in the pathway amino-acid biosynthesis; L-proline biosynthesis; L-glutamate 5-semialdehyde from L-glutamate: step 2/2. Catalyzes the NADPH-dependent reduction of L-glutamate 5-phosphate into L-glutamate 5-semialdehyde and phosphate. The product spontaneously undergoes cyclization to form 1-pyrroline-5-carboxylate. The protein is Gamma-glutamyl phosphate reductase of Burkholderia orbicola (strain AU 1054).